The following is a 402-amino-acid chain: MGCSASKPSEPSNAKLPSAPVPKKVEQVPEPKPEPQPQPEPQPQPEPPKPAEPAPAPAPAPEPQKPAEPAPKVVAVEDDTNEAYGLLLCGAGESGKTTFTRQLKLRYLNGFNEKDCRDFLRTIRGNLVETMQLLLVWLEHNNIEIEDSELSSMAQDIIDVDPQDCEFNEELVEKLKALWENEQIKKAFEHKDETAVPDHMPYFFAKIDELAGEDYIPSNEDVLRARIRSIGIEAITFDLQGARIRIFDVGGQKSERSKWANVMNQVEGVIFCVSFAEFDKPMFEDQNVLRINDSLEIFGNITHQEKFSNSPIFLVCNKFDVFTEKIKNTDAFVKIFPEFSGDSHNPEACADYLIQRFLDKAAPLSEDRPIIQYKIVALNGDQVVETADAICKFISDKYYQDA.

Residues 1 to 12 show a composition bias toward polar residues; that stretch reads MGCSASKPSEPS. Residues 1–70 form a disordered region; that stretch reads MGCSASKPSE…PEPQKPAEPA (70 aa). A lipid anchor (N-myristoyl glycine) is attached at glycine 2. Cysteine 3 carries the S-palmitoyl cysteine lipid modification. Basic and acidic residues predominate over residues 23–33; it reads KKVEQVPEPKP. Residues 34-69 are compositionally biased toward pro residues; sequence EPQPQPEPQPQPEPPKPAEPAPAPAPAPEPQKPAEP. The 321-residue stretch at 82–402 folds into the G-alpha domain; sequence EAYGLLLCGA…FISDKYYQDA (321 aa). The interval 85–98 is G1 motif; it reads GLLLCGAGESGKTT. Positions 93, 94, 95, 96, 97, 98, 198, 223, 229, 251, 317, 318, 320, and 377 each coordinate GTP. Threonine 97 contributes to the Mg(2+) binding site. The tract at residues 221-229 is G2 motif; that stretch reads DVLRARIRS. Serine 229 contributes to the Mg(2+) binding site. The tract at residues 244 to 253 is G3 motif; that stretch reads IRIFDVGGQK. The tract at residues 313 to 320 is G4 motif; it reads FLVCNKFD. Residues 375-380 are G5 motif; it reads IVALNG.

It belongs to the G-alpha family. As to quaternary structure, g proteins are composed of 3 units; alpha, beta and gamma. The alpha chain contains the guanine nucleotide binding site. Mg(2+) serves as cofactor.

The protein localises to the cytoplasm. It is found in the perinuclear region. The protein resides in the endomembrane system. Its function is as follows. Guanine nucleotide-binding proteins (G proteins) are involved as modulators or transducers in various transmembrane signaling systems. This is Guanine nucleotide-binding protein subunit alpha-1 (GA1) from Trichomonas vaginalis.